Reading from the N-terminus, the 446-residue chain is Ribosomal protein uS12 methylthiotransferase RimO (446 aa).

An MTTase N-terminal domain is found at 4 to 119 (LKVGLISLGC…LVENINNFIS (116 aa)). [4Fe-4S] cluster-binding residues include cysteine 13, cysteine 48, cysteine 82, cysteine 157, cysteine 161, and cysteine 164. In terms of domain architecture, Radical SAM core spans 143-373 (TTKSHTAYLR…MMLQKHIIYS (231 aa)). A TRAM domain is found at 376–442 (KYKIGNKYKV…EYDLVGVVYD (67 aa)).

Belongs to the methylthiotransferase family. RimO subfamily. [4Fe-4S] cluster serves as cofactor.

The protein localises to the cytoplasm. It carries out the reaction L-aspartate(89)-[ribosomal protein uS12]-hydrogen + (sulfur carrier)-SH + AH2 + 2 S-adenosyl-L-methionine = 3-methylsulfanyl-L-aspartate(89)-[ribosomal protein uS12]-hydrogen + (sulfur carrier)-H + 5'-deoxyadenosine + L-methionine + A + S-adenosyl-L-homocysteine + 2 H(+). In terms of biological role, catalyzes the methylthiolation of an aspartic acid residue of ribosomal protein uS12. The polypeptide is Ribosomal protein uS12 methylthiotransferase RimO (Clostridium kluyveri (strain ATCC 8527 / DSM 555 / NBRC 12016 / NCIMB 10680 / K1)).